A 250-amino-acid chain; its full sequence is 4-hydroxy-tetrahydrodipicolinate reductase (250 aa).

NAD(+) is bound by residues 10-15 (GVKGRI), 78-80 (GTT), and 105-108 (APNF). His135 (proton donor/acceptor) is an active-site residue. Position 136 (His136) interacts with (S)-2,3,4,5-tetrahydrodipicolinate. Lys139 acts as the Proton donor in catalysis. 145-146 (GT) is a (S)-2,3,4,5-tetrahydrodipicolinate binding site.

This sequence belongs to the DapB family.

The protein localises to the cytoplasm. The enzyme catalyses (S)-2,3,4,5-tetrahydrodipicolinate + NAD(+) + H2O = (2S,4S)-4-hydroxy-2,3,4,5-tetrahydrodipicolinate + NADH + H(+). The catalysed reaction is (S)-2,3,4,5-tetrahydrodipicolinate + NADP(+) + H2O = (2S,4S)-4-hydroxy-2,3,4,5-tetrahydrodipicolinate + NADPH + H(+). Its pathway is amino-acid biosynthesis; L-lysine biosynthesis via DAP pathway; (S)-tetrahydrodipicolinate from L-aspartate: step 4/4. Functionally, catalyzes the conversion of 4-hydroxy-tetrahydrodipicolinate (HTPA) to tetrahydrodipicolinate. This chain is 4-hydroxy-tetrahydrodipicolinate reductase, found in Streptomyces avermitilis (strain ATCC 31267 / DSM 46492 / JCM 5070 / NBRC 14893 / NCIMB 12804 / NRRL 8165 / MA-4680).